A 283-amino-acid polypeptide reads, in one-letter code: MASYLKLKAQEETWLQRHSRLILAILAGLGSLLTAYLTYTKLTEQPAAFCTGDGGCDLVLSSRWAEFLGIPTAAVGLLGFLGVLALAVLPDGLPLVKRWRWPALFGLVSAMTAFEMYMLYLMVAVLRQFCMYCTTAIILVAGLGLVTVLGHRWLDGGKLAFSYILVAFLTLVTTIGVYANQVPPPSPLAVGLAAHLRQIGGTMYGAYWCPHCQDQKELFGAAFDQVPYVECSPNGPGTPQAQECTEAGITSYPTWIINGRTYTGVRSLEALAVASGYPLEEGR.

At 1-20 the chain is on the cytoplasmic side; the sequence is MASYLKLKAQEETWLQRHSR. A helical transmembrane segment spans residues 21-41; it reads LILAILAGLGSLLTAYLTYTK. Residues 42 to 66 are Periplasmic-facing; that stretch reads LTEQPAAFCTGDGGCDLVLSSRWAE. Cysteines 50 and 56 form a disulfide. Position 59–65 (59–65) interacts with a quinone; it reads VLSSRWA. A helical transmembrane segment spans residues 67-87; sequence FLGIPTAAVGLLGFLGVLALA. At 88–102 the chain is on the cytoplasmic side; it reads VLPDGLPLVKRWRWP. A helical membrane pass occupies residues 103-123; that stretch reads ALFGLVSAMTAFEMYMLYLMV. 111-122 contacts a quinone; it reads MTAFEMYMLYLM. The Periplasmic segment spans residues 124–128; sequence AVLRQ. Residues 129-149 form a helical membrane-spanning segment; sequence FCMYCTTAIILVAGLGLVTVL. An intrachain disulfide couples cysteine 130 to cysteine 133. Topologically, residues 150–158 are cytoplasmic; sequence GHRWLDGGK. Residues 159-179 traverse the membrane as a helical segment; the sequence is LAFSYILVAFLTLVTTIGVYA. The Periplasmic portion of the chain corresponds to 180–283; sequence NQVPPPSPLA…ASGYPLEEGR (104 aa). The segment at 186–283 is thioredoxin-like domain; the sequence is SPLAVGLAAH…ASGYPLEEGR (98 aa). Cystine bridges form between cysteine 209/cysteine 212 and cysteine 231/cysteine 244.

Belongs to the VKOR family.

It is found in the membrane. Its activity is regulated as follows. Inhibited by ferulenol. Its function is as follows. Thiol-disulfide oxidoreductase that catalyzes vitamin K-dependent disulfide bond formation in periplasmic target proteins. The sequence is that of Vitamin K epoxide reductase homolog from Synechococcus sp. (strain JA-2-3B'a(2-13)) (Cyanobacteria bacterium Yellowstone B-Prime).